A 198-amino-acid polypeptide reads, in one-letter code: Ribonuclease HII (198 aa).

In terms of domain architecture, RNase H type-2 spans 11-198; sequence NLIAGVDEVG…GPVKRVLGLV (188 aa). 3 residues coordinate a divalent metal cation: aspartate 17, glutamate 18, and aspartate 109.

Belongs to the RNase HII family. The cofactor is Mn(2+). Mg(2+) serves as cofactor.

It localises to the cytoplasm. The catalysed reaction is Endonucleolytic cleavage to 5'-phosphomonoester.. Functionally, endonuclease that specifically degrades the RNA of RNA-DNA hybrids. The chain is Ribonuclease HII from Yersinia pseudotuberculosis serotype O:3 (strain YPIII).